A 231-amino-acid polypeptide reads, in one-letter code: Large ribosomal subunit protein uL1 (231 aa).

Belongs to the universal ribosomal protein uL1 family. In terms of assembly, part of the 50S ribosomal subunit.

Functionally, binds directly to 23S rRNA. The L1 stalk is quite mobile in the ribosome, and is involved in E site tRNA release. In terms of biological role, protein L1 is also a translational repressor protein, it controls the translation of the L11 operon by binding to its mRNA. In Neisseria meningitidis serogroup C (strain 053442), this protein is Large ribosomal subunit protein uL1.